The chain runs to 379 residues: Cytochrome b (379 aa).

A run of 4 helical transmembrane segments spans residues 34 to 54, 78 to 99, 114 to 134, and 179 to 199; these read FGSL…LLAM, WLIR…YLHI, WNTG…GYVL, and FFAL…IHLT. 2 residues coordinate heme b: His-84 and His-98. Residues His-183 and His-197 each contribute to the heme b site. His-202 is an a ubiquinone binding site. Helical transmembrane passes span 227 to 247, 289 to 309, 321 to 341, and 348 to 368; these read LKDI…AFFS, LGGV…PFLH, LSQM…WIGS, and FIII…ILFP.

It belongs to the cytochrome b family. The cytochrome bc1 complex contains 11 subunits: 3 respiratory subunits (MT-CYB, CYC1 and UQCRFS1), 2 core proteins (UQCRC1 and UQCRC2) and 6 low-molecular weight proteins (UQCRH/QCR6, UQCRB/QCR7, UQCRQ/QCR8, UQCR10/QCR9, UQCR11/QCR10 and a cleavage product of UQCRFS1). This cytochrome bc1 complex then forms a dimer. Heme b is required as a cofactor.

It localises to the mitochondrion inner membrane. Component of the ubiquinol-cytochrome c reductase complex (complex III or cytochrome b-c1 complex) that is part of the mitochondrial respiratory chain. The b-c1 complex mediates electron transfer from ubiquinol to cytochrome c. Contributes to the generation of a proton gradient across the mitochondrial membrane that is then used for ATP synthesis. The polypeptide is Cytochrome b (MT-CYB) (Dromaius novaehollandiae (Emu)).